The chain runs to 92 residues: Protein S100-A12 (92 aa).

2 consecutive EF-hand domains span residues Asn13–Ile48 and Lys49–Ala84. His16 provides a ligand contact to Cu cation. Residue His16 coordinates Zn(2+). Residues Ser19, Lys22, and His24 each contribute to the Ca(2+) site. Residue Asp26 participates in Cu cation binding. Residue Asp26 coordinates Zn(2+). Thr27 and Glu32 together coordinate Ca(2+). The tract at residues Thr38–Val53 is hinge domain. Residues Asp62, Asn64, Asp66, Gln68, and Glu73 each coordinate Ca(2+). His86 and His90 together coordinate Cu cation. Positions 86 and 90 each coordinate Zn(2+).

Belongs to the S-100 family. Homodimer. Homooligomer (tetramer or hexamer) in the presence of calcium, zinc and copper ions. Interacts with AGER and both calcium and zinc are essential for the interaction. Interacts with CACYBP in a calcium-dependent manner. Predominantly expressed by neutrophils, monocytes and activated macrophages. Expressed by eosinophils and macrophages in asthmatic airways in regions where mast cells accumulate. Found in high concentrations in the serum of patients suffering from various inflammatory disorders, such as rheumatoid arthritis, psoriatic arthritis, Crohn's disease, ulcerative colitis, and Kawasaki disease.

The protein resides in the secreted. It localises to the cytoplasm. The protein localises to the cytoskeleton. It is found in the cell membrane. Its function is as follows. S100A12 is a calcium-, zinc- and copper-binding protein which plays a prominent role in the regulation of inflammatory processes and immune response. Its pro-inflammatory activity involves recruitment of leukocytes, promotion of cytokine and chemokine production, and regulation of leukocyte adhesion and migration. Acts as an alarmin or a danger associated molecular pattern (DAMP) molecule and stimulates innate immune cells via binding to receptor for advanced glycation endproducts (AGER). Binding to AGER activates the MAP-kinase and NF-kappa-B signaling pathways leading to production of pro-inflammatory cytokines and up-regulation of cell adhesion molecules ICAM1 and VCAM1. Acts as a monocyte and mast cell chemoattractant. Can stimulate mast cell degranulation and activation which generates chemokines, histamine and cytokines inducing further leukocyte recruitment to the sites of inflammation. Can inhibit the activity of matrix metalloproteinases; MMP2, MMP3 and MMP9 by chelating Zn(2+) from their active sites. Possesses filariacidal and filariastatic activity. Calcitermin possesses antifungal activity against C.albicans and is also active against E.coli and P.aeruginosa but not L.monocytogenes and S.aureus. The sequence is that of Protein S100-A12 (S100A12) from Homo sapiens (Human).